The sequence spans 97 residues: Mapk-regulated corepressor-interacting protein 1 (97 aa).

The segment covering 1 to 26 has biased composition (polar residues); the sequence is MTSSSTPRMHTYKRTSSPRSPTNTGE. 2 disordered regions span residues 1–27 and 54–97; these read MTSS…TGEL and QNHE…SKKS. Composition is skewed to basic and acidic residues over residues 54–68 and 84–97; these read QNHE…EYVE and SDLK…SKKS. The short motif at 80–84 is the PXDLS motif element; sequence PVDLS.

This sequence belongs to the MCRIP family.

It localises to the nucleus. The protein resides in the cytoplasm. Its subcellular location is the stress granule. Its function is as follows. May play a role in the regulation of the epithelial-mesenchymal transition. This chain is Mapk-regulated corepressor-interacting protein 1 (mcrip1), found in Danio rerio (Zebrafish).